The chain runs to 242 residues: N-alpha-acetyltransferase 60 (242 aa).

Topologically, residues 1 to 192 (MTEVVPSSAL…GGHPPWTILD (192 aa)) are cytoplasmic. An N-acetyltransferase domain is found at 13–182 (VSLRLLCHDD…DGFTYVLYIN (170 aa)). A substrate-binding site is contributed by tyrosine 38. Position 79 is an N6-acetyllysine; by autocatalysis (lysine 79). Residue tyrosine 97 is part of the active site. Leucine 99 contacts substrate. 101–103 (LGV) is an acetyl-CoA binding site. N6-acetyllysine; by autocatalysis is present on residues lysine 105, lysine 109, and lysine 121. An acetyl-CoA-binding site is contributed by 109-114 (KHGIGS). Histidine 138 is an active-site residue. Acetyl-CoA contacts are provided by residues asparagine 143 and 150-153 (YENR). Lysine 156 bears the N6-acetyllysine; by autocatalysis mark. Residues 162-173 (PYYYSIRGVLKD) are required for homodimerization. A substrate-binding site is contributed by tyrosine 165. The helical intramembrane region spans 193-236 (YIQHLGSALASLSPCSIPHRVYRQAHSLLCSFLPWSGISSKSGI). Topologically, residues 237 to 242 (EYSRTM) are cytoplasmic.

It belongs to the acetyltransferase family. NAA60 subfamily. As to quaternary structure, monomer and homodimer; monomer in presence of substrate and homodimer in its absence. Post-translationally, acetylated: autoacetylation is required for optimal acetyltransferase activity.

Its subcellular location is the golgi apparatus membrane. The catalysed reaction is N-terminal L-methionyl-[transmembrane protein] + acetyl-CoA = N-terminal N(alpha)-acetyl-L-methionyl-[transmembrane protein] + CoA + H(+). It catalyses the reaction L-lysyl-[protein] + acetyl-CoA = N(6)-acetyl-L-lysyl-[protein] + CoA + H(+). Its function is as follows. N-alpha-acetyltransferase that specifically mediates the acetylation of N-terminal residues of the transmembrane proteins, with a strong preference for N-termini facing the cytosol. Displays N-terminal acetyltransferase activity towards a range of N-terminal sequences including those starting with Met-Lys, Met-Val, Met-Ala and Met-Met. Required for normal chromosomal segregation during anaphase. May also show histone acetyltransferase activity; such results are however unclear in vivo and would require additional experimental evidences. In Homo sapiens (Human), this protein is N-alpha-acetyltransferase 60.